The primary structure comprises 187 residues: GTP cyclohydrolase 1 (187 aa).

Zn(2+)-binding residues include C81, H84, and C152.

The protein belongs to the GTP cyclohydrolase I family. Toroid-shaped homodecamer, composed of two pentamers of five dimers.

It catalyses the reaction GTP + H2O = 7,8-dihydroneopterin 3'-triphosphate + formate + H(+). It participates in cofactor biosynthesis; 7,8-dihydroneopterin triphosphate biosynthesis; 7,8-dihydroneopterin triphosphate from GTP: step 1/1. In Pyrobaculum aerophilum (strain ATCC 51768 / DSM 7523 / JCM 9630 / CIP 104966 / NBRC 100827 / IM2), this protein is GTP cyclohydrolase 1.